A 90-amino-acid polypeptide reads, in one-letter code: Phenol 2-monooxygenase, stimulatory component DmpM (90 aa).

Belongs to the TmoD/XamoD family. As to quaternary structure, active as a monomer. Formation of dimers inactivates the protein. The multicomponent enzyme phenol hydroxylase is formed by DmpL (P1 component), DmpM (P2 component), DmpN (P3 component), DmpO (P4 component) and DmpP (P5 component).

It catalyses the reaction phenol + NADH + O2 + H(+) = catechol + NAD(+) + H2O. Its pathway is aromatic compound metabolism; phenol degradation. Its function is as follows. Part of a multicomponent enzyme which catalyzes the degradation of phenol and some of its methylated derivatives. DmpM is a regulatory subunit that stimulates the phenol hydroxylase activity of the complex. The steady-state rate of phenol hydroxylase turnover is dependent on the DmpM concentration, with a maximum observed rate at about 1.5 DmpM per oxygenase monomer. Higher concentrations of DmpM inhibit phenol hydroxylase activity. May act by altering the redox potential of the oxygenase. Required for growth on phenol and for in vitro phenol hydroxylase activity. The sequence is that of Phenol 2-monooxygenase, stimulatory component DmpM from Pseudomonas sp. (strain CF600).